The primary structure comprises 94 residues: Large ribosomal subunit protein bL27 (94 aa).

Residues 1-25 (MAHKKGTGSTRNGRDSQSKRLGVKR) are disordered.

The protein belongs to the bacterial ribosomal protein bL27 family.

This is Large ribosomal subunit protein bL27 from Gloeothece citriformis (strain PCC 7424) (Cyanothece sp. (strain PCC 7424)).